A 236-amino-acid polypeptide reads, in one-letter code: 7-cyano-7-deazaguanine synthase (236 aa).

7–17 (CSGGLDSVTLA) lines the ATP pocket. Positions 185, 193, 196, and 199 each coordinate Zn(2+).

Belongs to the QueC family. It depends on Zn(2+) as a cofactor.

The catalysed reaction is 7-carboxy-7-deazaguanine + NH4(+) + ATP = 7-cyano-7-deazaguanine + ADP + phosphate + H2O + H(+). It participates in purine metabolism; 7-cyano-7-deazaguanine biosynthesis. In terms of biological role, catalyzes the ATP-dependent conversion of 7-carboxy-7-deazaguanine (CDG) to 7-cyano-7-deazaguanine (preQ(0)). The polypeptide is 7-cyano-7-deazaguanine synthase (Rhizobium johnstonii (strain DSM 114642 / LMG 32736 / 3841) (Rhizobium leguminosarum bv. viciae)).